Consider the following 267-residue polypeptide: Glutamate racemase (267 aa).

Substrate is bound by residues 9–10 (DS) and 41–42 (YG). The active-site Proton donor/acceptor is cysteine 72. Residue 73 to 74 (NT) coordinates substrate. Cysteine 184 serves as the catalytic Proton donor/acceptor. Position 185 to 186 (185 to 186 (TH)) interacts with substrate.

The protein belongs to the aspartate/glutamate racemases family.

The enzyme catalyses L-glutamate = D-glutamate. It participates in cell wall biogenesis; peptidoglycan biosynthesis. Functionally, provides the (R)-glutamate required for cell wall biosynthesis. The sequence is that of Glutamate racemase from Staphylococcus epidermidis (strain ATCC 12228 / FDA PCI 1200).